Reading from the N-terminus, the 439-residue chain is Protein translocase subunit SecY (439 aa).

10 helical membrane passes run 19-39 (ILFT…TVPG), 68-88 (YSLF…VQLL), 116-136 (YITL…FQAM), 151-171 (LMIG…GEQI), 176-196 (FGSG…PSAV), 216-236 (WLFV…TTFV), 269-289 (VIPV…LQFL), 312-332 (WTGM…YSFV), 373-393 (VGAL…NVWG), and 396-416 (KIVA…IQAV).

Belongs to the SecY/SEC61-alpha family. As to quaternary structure, component of the Sec protein translocase complex. Heterotrimer consisting of SecY, SecE and SecG subunits. The heterotrimers can form oligomers, although 1 heterotrimer is thought to be able to translocate proteins. Interacts with the ribosome. Interacts with SecDF, and other proteins may be involved. Interacts with SecA.

The protein localises to the cell membrane. Functionally, the central subunit of the protein translocation channel SecYEG. Consists of two halves formed by TMs 1-5 and 6-10. These two domains form a lateral gate at the front which open onto the bilayer between TMs 2 and 7, and are clamped together by SecE at the back. The channel is closed by both a pore ring composed of hydrophobic SecY resides and a short helix (helix 2A) on the extracellular side of the membrane which forms a plug. The plug probably moves laterally to allow the channel to open. The ring and the pore may move independently. This chain is Protein translocase subunit SecY, found in Lactococcus lactis subsp. lactis (strain IL1403) (Streptococcus lactis).